The chain runs to 426 residues: Gamma-glutamyl phosphate reductase (426 aa).

Belongs to the gamma-glutamyl phosphate reductase family.

It localises to the cytoplasm. It carries out the reaction L-glutamate 5-semialdehyde + phosphate + NADP(+) = L-glutamyl 5-phosphate + NADPH + H(+). It functions in the pathway amino-acid biosynthesis; L-proline biosynthesis; L-glutamate 5-semialdehyde from L-glutamate: step 2/2. Its function is as follows. Catalyzes the NADPH-dependent reduction of L-glutamate 5-phosphate into L-glutamate 5-semialdehyde and phosphate. The product spontaneously undergoes cyclization to form 1-pyrroline-5-carboxylate. In Paracidovorax citrulli (strain AAC00-1) (Acidovorax citrulli), this protein is Gamma-glutamyl phosphate reductase.